Consider the following 467-residue polypeptide: MTATSNSAPLAGGSLSSSATAQPPQPPPGHQQQHPLPQIYDSQMQYYYGSSMPNQPIPTYTAQNGAPQQFGTPPYYQDANGQFGQVPAQQQMMTAGHPYFYMAQPQQGGQHVAQSGQPQIFYYQQPLGQMAQQAAPMYFHPMQAASTPMLSEQMSMMPQIQSTNPQQSEQLRKSGAQISTTRTVPLTSSTPLPTSREYETVQRDRNRNSQSRYQCPIEHDDLPIDEISKITIDNHNDDTMSAEKENRFNKNRVEKLGRRGFAKPEVDSQLPHNFKTRLCMTHAAGINPCALGARCKFAHGLKELRASDIPTRYPNNKYKTKLCKNFARGGSGVCPYGLRCEFVHPSDTEFQNIPPYQRKMVEEHDSIPEDYVVARYQPRFMHTSGKATTPTKVTLKQRNVAGSMMCLSNTGRDLEAGGDFNHPEINENDLPPHLRRIRRGNPPVTRSRPSFSTKWTSVENLGLRGHY.

Composition is skewed to low complexity over residues 1–22 (MTAT…ATAQ) and 179–195 (STTR…LPTS). Disordered regions lie at residues 1–35 (MTAT…QQHP) and 163–209 (TNPQ…NRNS). A Phosphothreonine modification is found at threonine 190. The segment covering 196–207 (REYETVQRDRNR) has biased composition (basic and acidic residues). 2 consecutive C3H1-type zinc fingers follow at residues 273-302 (NFKT…HGLK) and 317-347 (KYKT…HPSD). A disordered region spans residues 425–451 (INENDLPPHLRRIRRGNPPVTRSRPSF). A Phosphoserine modification is found at serine 457.

In terms of assembly, interacts (probably when phosphorylated on Thr-190) with plk-1 (via POLO box domain) and plk-2 (via POLO box domain). Post-translationally, phosphorylation on Ser-457 by par-1 promotes localization of the protein to the anterior cytoplasm of the zygote.

The protein resides in the cytoplasm. Functions with mex-5 to affect embryonic viability, establish soma germline asymmetry in embryos and establish plk-1, pie-1, mex-1, and pos-1 asymmetry in embryos. Also affects formation of intestinal cells. The protein is Zinc finger protein mex-6 (mex-6) of Caenorhabditis elegans.